The following is a 263-amino-acid chain: 3-methyl-2-oxobutanoate hydroxymethyltransferase (263 aa).

Mg(2+) contacts are provided by aspartate 45 and aspartate 84. Residues 45–46 (DS), aspartate 84, and lysine 112 contribute to the 3-methyl-2-oxobutanoate site. Glutamate 114 is a binding site for Mg(2+). Glutamate 181 serves as the catalytic Proton acceptor.

This sequence belongs to the PanB family. Homodecamer; pentamer of dimers. It depends on Mg(2+) as a cofactor.

The protein resides in the cytoplasm. It carries out the reaction 3-methyl-2-oxobutanoate + (6R)-5,10-methylene-5,6,7,8-tetrahydrofolate + H2O = 2-dehydropantoate + (6S)-5,6,7,8-tetrahydrofolate. The protein operates within cofactor biosynthesis; (R)-pantothenate biosynthesis; (R)-pantoate from 3-methyl-2-oxobutanoate: step 1/2. In terms of biological role, catalyzes the reversible reaction in which hydroxymethyl group from 5,10-methylenetetrahydrofolate is transferred onto alpha-ketoisovalerate to form ketopantoate. This Buchnera aphidicola subsp. Schizaphis graminum (strain Sg) protein is 3-methyl-2-oxobutanoate hydroxymethyltransferase.